The chain runs to 399 residues: Glutamyl-tRNA reductase (399 aa).

Substrate-binding positions include 45-48 (TCNR), S101, 106-108 (EDQ), and Q112. The active-site Nucleophile is the C46. Residue 177-182 (GFGKIG) participates in NADP(+) binding.

This sequence belongs to the glutamyl-tRNA reductase family. In terms of assembly, homodimer.

It catalyses the reaction (S)-4-amino-5-oxopentanoate + tRNA(Glu) + NADP(+) = L-glutamyl-tRNA(Glu) + NADPH + H(+). It participates in porphyrin-containing compound metabolism; protoporphyrin-IX biosynthesis; 5-aminolevulinate from L-glutamyl-tRNA(Glu): step 1/2. Functionally, catalyzes the NADPH-dependent reduction of glutamyl-tRNA(Glu) to glutamate 1-semialdehyde (GSA). This Clostridium kluyveri (strain ATCC 8527 / DSM 555 / NBRC 12016 / NCIMB 10680 / K1) protein is Glutamyl-tRNA reductase.